A 276-amino-acid polypeptide reads, in one-letter code: Plant cysteine oxidase 2 (276 aa).

Residues 1–40 (MGTDTVMSGRVRKDLSKTNPNGNIPENRSNSRKKIQRRSK) form a disordered region. Residues 17–28 (KTNPNGNIPENR) show a composition bias toward polar residues. Residues 30–40 (NSRKKIQRRSK) are compositionally biased toward basic residues. His-134, His-136, and His-197 together coordinate Fe cation.

This sequence belongs to the cysteine dioxygenase family. The cofactor is Fe(2+).

It is found in the nucleus. The protein localises to the cytoplasm. The catalysed reaction is L-cysteine + O2 = 3-sulfino-L-alanine + H(+). In terms of biological role, catalyzes the oxidation of N-terminal cysteine residues (N-Cys), thus preparing the protein for N-end rule pathway-mediated proteasomal degradation, upstream of the N-end rule enzymes ATE1, ATE2 and PRT6. Controls the preparation of the group VII ethylene response factor (ERF-VII) proteins for degradation via the 26S proteasome N-end rule pathway. Acts as an oxygen sensor that controls the stability of ERF-VII proteins, which are stabilized in flooding-induced hypoxia, and regulate transcriptional adaptation to these adverse conditions. Not active on Cys located inside or at the C-terminus of a peptide. Acts redundantly with PCO1 to repress the anaerobic response. The polypeptide is Plant cysteine oxidase 2 (Arabidopsis thaliana (Mouse-ear cress)).